A 164-amino-acid polypeptide reads, in one-letter code: Shikimate kinase (164 aa).

Gly11–Thr16 serves as a coordination point for ATP. Mg(2+) is bound at residue Ser15. 3 residues coordinate substrate: Asp33, Arg57, and Gly79. Arg117 is an ATP binding site. Residue Arg134 coordinates substrate.

It belongs to the shikimate kinase family. As to quaternary structure, monomer. It depends on Mg(2+) as a cofactor.

The protein resides in the cytoplasm. The enzyme catalyses shikimate + ATP = 3-phosphoshikimate + ADP + H(+). It functions in the pathway metabolic intermediate biosynthesis; chorismate biosynthesis; chorismate from D-erythrose 4-phosphate and phosphoenolpyruvate: step 5/7. In terms of biological role, catalyzes the specific phosphorylation of the 3-hydroxyl group of shikimic acid using ATP as a cosubstrate. The protein is Shikimate kinase of Persephonella marina (strain DSM 14350 / EX-H1).